A 193-amino-acid polypeptide reads, in one-letter code: Coiled-coil domain-containing protein 184 (193 aa).

Positions 39–68 form a coiled coil; the sequence is GMKELMEHLKAQLQALFEDVRAMRGALDEQ. Residues 101–176 form a disordered region; sequence GLGVAGGKGS…LGENGPLVEP (76 aa). Over residues 135–146 the composition is skewed to acidic residues; that stretch reads PDEEDEEEEEEK.

In Rattus norvegicus (Rat), this protein is Coiled-coil domain-containing protein 184 (Ccdc184).